The sequence spans 433 residues: Gamma-glutamyl phosphate reductase (433 aa).

Belongs to the gamma-glutamyl phosphate reductase family.

The protein localises to the cytoplasm. The enzyme catalyses L-glutamate 5-semialdehyde + phosphate + NADP(+) = L-glutamyl 5-phosphate + NADPH + H(+). It participates in amino-acid biosynthesis; L-proline biosynthesis; L-glutamate 5-semialdehyde from L-glutamate: step 2/2. Functionally, catalyzes the NADPH-dependent reduction of L-glutamate 5-phosphate into L-glutamate 5-semialdehyde and phosphate. The product spontaneously undergoes cyclization to form 1-pyrroline-5-carboxylate. The protein is Gamma-glutamyl phosphate reductase of Cyanothece sp. (strain PCC 7425 / ATCC 29141).